The chain runs to 104 residues: Growth-regulated protein homolog (104 aa).

Positions 1 to 31 (MAPAATAAAPRLLRAALLLLLLVAAGRRAAG) are cleaved as a signal peptide. Intrachain disulfides connect Cys40/Cys66 and Cys42/Cys82.

It belongs to the intercrine alpha (chemokine CxC) family.

It localises to the secreted. Its function is as follows. Plays a role in monocyte adhesion to the endothelium. This Oryctolagus cuniculus (Rabbit) protein is Growth-regulated protein homolog.